Reading from the N-terminus, the 232-residue chain is 5'-methylthioadenosine/S-adenosylhomocysteine nucleosidase (232 aa).

The active-site Proton acceptor is Glu-12. Substrate contacts are provided by residues Gly-78, Ile-152, and 173–174 (ME). The active-site Proton donor is the Asp-197.

It belongs to the PNP/UDP phosphorylase family. MtnN subfamily. In terms of assembly, homodimer.

The enzyme catalyses S-adenosyl-L-homocysteine + H2O = S-(5-deoxy-D-ribos-5-yl)-L-homocysteine + adenine. The catalysed reaction is S-methyl-5'-thioadenosine + H2O = 5-(methylsulfanyl)-D-ribose + adenine. It carries out the reaction 5'-deoxyadenosine + H2O = 5-deoxy-D-ribose + adenine. The protein operates within amino-acid biosynthesis; L-methionine biosynthesis via salvage pathway; S-methyl-5-thio-alpha-D-ribose 1-phosphate from S-methyl-5'-thioadenosine (hydrolase route): step 1/2. In terms of biological role, catalyzes the irreversible cleavage of the glycosidic bond in both 5'-methylthioadenosine (MTA) and S-adenosylhomocysteine (SAH/AdoHcy) to adenine and the corresponding thioribose, 5'-methylthioribose and S-ribosylhomocysteine, respectively. Also cleaves 5'-deoxyadenosine, a toxic by-product of radical S-adenosylmethionine (SAM) enzymes, into 5-deoxyribose and adenine. Thus, is required for in vivo function of the radical SAM enzymes biotin synthase and lipoic acid synthase, that are inhibited by 5'-deoxyadenosine accumulation. The polypeptide is 5'-methylthioadenosine/S-adenosylhomocysteine nucleosidase (Escherichia coli O7:K1 (strain IAI39 / ExPEC)).